The sequence spans 148 residues: Nucleoside diphosphate kinase 1 (148 aa).

Residues K9, F57, R85, T91, R102, and N112 each contribute to the ATP site. H115 acts as the Pros-phosphohistidine intermediate in catalysis.

It belongs to the NDK family. Mg(2+) serves as cofactor.

The enzyme catalyses a 2'-deoxyribonucleoside 5'-diphosphate + ATP = a 2'-deoxyribonucleoside 5'-triphosphate + ADP. The catalysed reaction is a ribonucleoside 5'-diphosphate + ATP = a ribonucleoside 5'-triphosphate + ADP. In terms of biological role, major role in the synthesis of nucleoside triphosphates other than ATP. The ATP gamma phosphate is transferred to the NDP beta phosphate via a ping-pong mechanism, using a phosphorylated active-site intermediate. In Mesembryanthemum crystallinum (Common ice plant), this protein is Nucleoside diphosphate kinase 1 (NDKP1).